We begin with the raw amino-acid sequence, 332 residues long: MMKKPVVIGLAVVVLAAVVAGGYWWYQSRQDNGLTLYGNVDIRTVNLSFRVGGRVESLAVDEGDAIKAGQVLGELDHKPYEIALMQAKAGVSVAQAQYDLMLAGYRDEEIAQAAAAVKQAQAAYDYAQNFYNRQQGLWKSRTISANDLENARSSRDQAQATLKSAQDKLRQYRSGNREQDIAQAKASLEQAQAQLAQAELNLQDSTLIAPSDGTLLTRAVEPGTVLNEGGTVFTVSLTRPVWVRAYVDERNLDQAQPGRKVLLYTDGRPDKPYHGQIGFVSPTAEFTPKTVETPDLRTDLVYRLRIVVTDADDALRQGMPVTVQFGDEAGHE.

Positions 1 to 16 (MMKKPVVIGLAVVVLA) are cleaved as a signal peptide. A coiled-coil region spans residues 108 to 209 (EEIAQAAAAV…LNLQDSTLIA (102 aa)).

It belongs to the UPF0194 family.

The protein localises to the periplasm. This is UPF0194 membrane protein YbhG from Escherichia coli O127:H6 (strain E2348/69 / EPEC).